Consider the following 70-residue polypeptide: Putative venom toxin Ts29 (70 aa).

The first 20 residues, 1–20 (MSPLFVVLLIATTTFYHSDA), serve as a signal peptide directing secretion.

As to expression, expressed by the venom gland.

Its subcellular location is the secreted. The chain is Putative venom toxin Ts29 from Tityus serrulatus (Brazilian scorpion).